Consider the following 271-residue polypeptide: Dioscorin dioA3 (271 aa).

The first 21 residues, 1–21 (MSSSTLLHLLLLSSLLFSCLS), serve as a signal peptide directing secretion. Residues 28-262 (DEFSYIEGNP…TNFRSVFYFE (235 aa)) enclose the Alpha-carbonic anhydrase domain. Residues C53 and C212 are joined by a disulfide bond. The active-site Proton acceptor is H94. L-ascorbate contacts are provided by residues D95, 120–122 (HFH), Q139, and 208–209 (TA).

Belongs to the alpha-carbonic anhydrase family. Monomer. Homodimer. Not glycosylated. Expressed in tuber (at protein level).

It carries out the reaction hydrogencarbonate + H(+) = CO2 + H2O. It catalyses the reaction 2 monodehydro-L-ascorbate radical + NADH + H(+) = 2 L-ascorbate + NAD(+). The carbonate dehydratase activity is not substantially changed by the addition of Zn(2+). In terms of biological role, storage protein of tuber. Involved in protection against oxidative stress. Has carbonate dehydratase, trypsin inhibitor, dehydroascorbate (DHA) reductase and monodehydroascorbate (MDA) reductase activities. Catalyzes the reactions of carbonate dehydratase and DHA reductase independently of zinc and glutathione (GSH). The coupled reaction is capable of recycling a plant antioxidant ascorbate using ubiquitous compounds H(2)O and CO(2). Exhibits antioxidant activity. Able to scavenge 1,1-diphenyl-2-picrylhydrazyl (DPPH) radical. Exhibits immunomodulatory activity. Activates Toll-like receptor 4 signaling pathways by up-regulating the gene expression of pro-inflammatory cytokines, such as tumor necrosis factor alpha, interleukin-1 beta and interleukin-6, and chemokines RANTES and MCP-1, in mouse RAW 264.7 macrophages. Stimulates the phagocytosis of E.coli by the LPS-treated mouse macrophages. The chain is Dioscorin dioA3 from Dioscorea japonica (Japanese yam).